A 104-amino-acid polypeptide reads, in one-letter code: Large ribosomal subunit protein uL23 (104 aa).

This sequence belongs to the universal ribosomal protein uL23 family. In terms of assembly, part of the 50S ribosomal subunit. Contacts protein L29, and trigger factor when it is bound to the ribosome.

One of the early assembly proteins it binds 23S rRNA. One of the proteins that surrounds the polypeptide exit tunnel on the outside of the ribosome. Forms the main docking site for trigger factor binding to the ribosome. The chain is Large ribosomal subunit protein uL23 from Paraburkholderia phytofirmans (strain DSM 17436 / LMG 22146 / PsJN) (Burkholderia phytofirmans).